A 448-amino-acid polypeptide reads, in one-letter code: uncharacterized protein (448 aa).

The segment covering 428–440 (PFKTDCDPNNDND) has biased composition (polar residues). Residues 428 to 448 (PFKTDCDPNNDNDLTPPAVFG) form a disordered region.

This is an uncharacterized protein from Mycoplasma pneumoniae (strain ATCC 29342 / M129 / Subtype 1) (Mycoplasmoides pneumoniae).